The chain runs to 361 residues: Probable mannose-1-phosphate guanylyltransferase 1 (361 aa).

Residues leucine 6 and valine 7 each contribute to the GDP-alpha-D-mannose site. Diphosphate-binding residues include glycine 9, glycine 11, threonine 12, arginine 13, and lysine 23. Residues glycine 85, asparagine 109, aspartate 111, glycine 146, and asparagine 173 each coordinate GDP-alpha-D-mannose.

This sequence belongs to the transferase hexapeptide repeat family.

The catalysed reaction is alpha-D-mannose 1-phosphate + GTP + H(+) = GDP-alpha-D-mannose + diphosphate. It participates in nucleotide-sugar biosynthesis; GDP-alpha-D-mannose biosynthesis; GDP-alpha-D-mannose from alpha-D-mannose 1-phosphate (GTP route): step 1/1. Functionally, catalyzes a reaction of the Smirnoff-Wheeler pathway, the major route to ascorbate biosynthesis in plants. The protein is Probable mannose-1-phosphate guanylyltransferase 1 of Oryza sativa subsp. japonica (Rice).